Reading from the N-terminus, the 318-residue chain is MSTNSIKLLAGNSHPGLAELISQRLGVPLSKVGVYQYSNKETSVTIGESIRDEDVYIIQTGYGEHEINDFLMELLILIHACKTASVRRITAVIPNFPYARQDKKDKSRAPITAKLIANLLETAGCDHVITMDLHASQIQGFFHIPVDNLYGEPSVLNYIRTKTDFNNAILVSPDAGGAKRVASLADKLDMNFALIHKERQKANEVSRMLLVGDVAGKSCLLIDDMADTCGTLVKACDTLMDHGAKEVIAIVTHGIFSGSAREKLINSRLSRIVCTNTVPVDLDLDIVDQVDISPTIAEAIRRLHNGESVSYLFTHAPV.

Residues Asp-132, His-134, His-143, and Asp-147 each coordinate Mg(2+).

It belongs to the ribose-phosphate pyrophosphokinase family.

It is found in the cytoplasm. It catalyses the reaction D-ribose 5-phosphate + ATP = 5-phospho-alpha-D-ribose 1-diphosphate + AMP + H(+). Its pathway is metabolic intermediate biosynthesis; 5-phospho-alpha-D-ribose 1-diphosphate biosynthesis; 5-phospho-alpha-D-ribose 1-diphosphate from D-ribose 5-phosphate (route I): step 1/1. 5-phosphoribose 1-diphosphate synthase involved in nucleotide, histidine, and tryptophan biosynthesis. Active in heteromultimeric complexes with other 5-phosphoribose 1-diphosphate synthases (PRS2, PRS3, PRS4 and PRS5). The chain is Ribose-phosphate pyrophosphokinase 2 (PRS2) from Saccharomyces cerevisiae (strain ATCC 204508 / S288c) (Baker's yeast).